A 191-amino-acid chain; its full sequence is Shikimate kinase (191 aa).

24–29 provides a ligand contact to ATP; that stretch reads GSGKTS. Thr28 is a Mg(2+) binding site. Substrate contacts are provided by Asp46, Arg70, and Gly92. Residue Arg130 participates in ATP binding. Arg149 contacts substrate.

The protein belongs to the shikimate kinase family. As to quaternary structure, monomer. Requires Mg(2+) as cofactor.

Its subcellular location is the cytoplasm. The enzyme catalyses shikimate + ATP = 3-phosphoshikimate + ADP + H(+). It functions in the pathway metabolic intermediate biosynthesis; chorismate biosynthesis; chorismate from D-erythrose 4-phosphate and phosphoenolpyruvate: step 5/7. Catalyzes the specific phosphorylation of the 3-hydroxyl group of shikimic acid using ATP as a cosubstrate. This chain is Shikimate kinase, found in Synechococcus sp. (strain CC9902).